Reading from the N-terminus, the 354-residue chain is S-adenosylmethionine:tRNA ribosyltransferase-isomerase (354 aa).

It belongs to the QueA family. Monomer.

The protein localises to the cytoplasm. It carries out the reaction 7-aminomethyl-7-carbaguanosine(34) in tRNA + S-adenosyl-L-methionine = epoxyqueuosine(34) in tRNA + adenine + L-methionine + 2 H(+). It functions in the pathway tRNA modification; tRNA-queuosine biosynthesis. In terms of biological role, transfers and isomerizes the ribose moiety from AdoMet to the 7-aminomethyl group of 7-deazaguanine (preQ1-tRNA) to give epoxyqueuosine (oQ-tRNA). The polypeptide is S-adenosylmethionine:tRNA ribosyltransferase-isomerase (Salmonella heidelberg (strain SL476)).